The chain runs to 783 residues: Coiled-coil domain-containing protein 30 (783 aa).

Positions 1–22 (MSQEKNEMFESEWSKEREREKQ) are enriched in basic and acidic residues. Disordered regions lie at residues 1–26 (MSQE…LASG), 101–191 (LGGK…LTMK), and 209–231 (LLQS…SSGE). Residues 22–98 (QLASGLDTAE…LSQEFAQLNH (77 aa)) adopt a coiled-coil conformation. Residues 106 to 115 (APSNLITSEN) are compositionally biased toward polar residues. Positions 131-191 (IQSRKEETEE…EEKEQQLTMK (61 aa)) are enriched in basic and acidic residues. 2 coiled-coil regions span residues 165-497 (REGQ…LNVH) and 527-622 (DKRI…RIIR). Positions 731 to 755 (EEIKSKEAMASSKSPEKSPENLVCS) are disordered.

Belongs to the prefoldin subunit beta family. Expressed in brain, kidney, pancreas, placenta, liver, thymus and prostate.

In Homo sapiens (Human), this protein is Coiled-coil domain-containing protein 30 (CCDC30).